A 284-amino-acid chain; its full sequence is P2R1A-PPP2R2A-interacting phosphatase regulator 1 (284 aa).

Disordered stretches follow at residues Met1–Ala32, Glu112–Arg198, and Ala235–Asp284. 2 stretches are compositionally biased toward low complexity: residues Ser152–Leu164 and Pro172–Pro184. The span at Ser258–Arg269 shows a compositional bias: polar residues.

The protein belongs to the FAM122 family.

It localises to the nucleus. The protein resides in the cytoplasm. Its function is as follows. Acts as an inhibitor of serine/threonine-protein phosphatase 2A (PP2A) activity. Potentiates ubiquitin-mediated proteasomal degradation of serine/threonine-protein phosphatase 2A catalytic subunit alpha (PPP2CA). Inhibits PP2A-mediated dephosphorylation of WEE1, promoting ubiquitin-mediated proteolysis of WEE1, thereby releasing G2/M checkpoint. The sequence is that of P2R1A-PPP2R2A-interacting phosphatase regulator 1 from Gallus gallus (Chicken).